The primary structure comprises 159 residues: MNKQISKKPAQRTIALNKKALHDYYVEQRFEAGLVLEGWEVKSIRAGRVQLRDSYVVFKSGEAWLIGAHLSPLPNVAEYMKADPQSSRKLLLNKREIGKLFGAVQKQGLTVVPLDLHWHKNHVKVEIALAKGKKTHDKRETIKRREWEREKHRVLKSHG.

It belongs to the SmpB family.

It is found in the cytoplasm. Its function is as follows. Required for rescue of stalled ribosomes mediated by trans-translation. Binds to transfer-messenger RNA (tmRNA), required for stable association of tmRNA with ribosomes. tmRNA and SmpB together mimic tRNA shape, replacing the anticodon stem-loop with SmpB. tmRNA is encoded by the ssrA gene; the 2 termini fold to resemble tRNA(Ala) and it encodes a 'tag peptide', a short internal open reading frame. During trans-translation Ala-aminoacylated tmRNA acts like a tRNA, entering the A-site of stalled ribosomes, displacing the stalled mRNA. The ribosome then switches to translate the ORF on the tmRNA; the nascent peptide is terminated with the 'tag peptide' encoded by the tmRNA and targeted for degradation. The ribosome is freed to recommence translation, which seems to be the essential function of trans-translation. This is SsrA-binding protein from Coxiella burnetii (strain CbuK_Q154) (Coxiella burnetii (strain Q154)).